We begin with the raw amino-acid sequence, 279 residues long: Acetyl-coenzyme A carboxylase carboxyl transferase subunit beta (279 aa).

The CoA carboxyltransferase N-terminal domain occupies 23–279 (LWWKCESCGA…LSQILGHLSS (257 aa)). Zn(2+)-binding residues include C27, C30, C46, and C49. Residues 27-49 (CESCGAMLHKKQVEDHFYTCCEC) form a C4-type zinc finger.

This sequence belongs to the AccD/PCCB family. In terms of assembly, acetyl-CoA carboxylase is a heterohexamer composed of biotin carboxyl carrier protein (AccB), biotin carboxylase (AccC) and two subunits each of ACCase subunit alpha (AccA) and ACCase subunit beta (AccD). Zn(2+) is required as a cofactor.

It localises to the cytoplasm. The catalysed reaction is N(6)-carboxybiotinyl-L-lysyl-[protein] + acetyl-CoA = N(6)-biotinyl-L-lysyl-[protein] + malonyl-CoA. The protein operates within lipid metabolism; malonyl-CoA biosynthesis; malonyl-CoA from acetyl-CoA: step 1/1. Its function is as follows. Component of the acetyl coenzyme A carboxylase (ACC) complex. Biotin carboxylase (BC) catalyzes the carboxylation of biotin on its carrier protein (BCCP) and then the CO(2) group is transferred by the transcarboxylase to acetyl-CoA to form malonyl-CoA. The chain is Acetyl-coenzyme A carboxylase carboxyl transferase subunit beta from Prosthecochloris aestuarii (strain DSM 271 / SK 413).